The following is a 166-amino-acid chain: Probable tyrosine-protein phosphatase DG1060 (166 aa).

In terms of domain architecture, Tyrosine-protein phosphatase spans 9–162 (NFGMVADDLY…LVTYNNAPQW (154 aa)). Cys101 acts as the Phosphocysteine intermediate in catalysis.

The protein belongs to the protein-tyrosine phosphatase family.

The protein resides in the cytoplasm. It catalyses the reaction O-phospho-L-tyrosyl-[protein] + H2O = L-tyrosyl-[protein] + phosphate. This Dictyostelium discoideum (Social amoeba) protein is Probable tyrosine-protein phosphatase DG1060 (DG1060).